A 585-amino-acid polypeptide reads, in one-letter code: ADP-ribosylation factor-binding protein GGA2 (585 aa).

Residues 33–169 enclose the VHS domain; that stretch reads ACRMSLAEPD…LLKYKGYAFP (137 aa). Glycyl lysine isopeptide (Lys-Gly) (interchain with G-Cter in ubiquitin) cross-links involve residues Lys-180 and Lys-287. Residues 196-321 form the GAT domain; the sequence is EIAQAAKLEE…LLEKFNLLKN (126 aa). The segment at 358-378 is disordered; sequence LDEAPSQGNNNTNGTGTPAAA. Residues 365–374 are compositionally biased toward low complexity; the sequence is GNNNTNGTGT. One can recognise a GAE domain in the interval 466–581; that stretch reads TTTAPARTLV…TQAEETAVFT (116 aa).

As to quaternary structure, binds to ARF1 and ARF2.

It localises to the golgi apparatus. The protein resides in the trans-Golgi network. May play a role in the regulation of membrane traffic through the trans-Golgi network. The polypeptide is ADP-ribosylation factor-binding protein GGA2 (GGA2) (Saccharomyces cerevisiae (strain ATCC 204508 / S288c) (Baker's yeast)).